The sequence spans 375 residues: tRNA-specific 2-thiouridylase MnmA (375 aa).

ATP contacts are provided by residues 20 to 27 (AMSGGVDS) and L46. The active-site Nucleophile is C114. An intrachain disulfide couples C114 to C211. G138 is an ATP binding site. Residues 160–162 (RDQ) form an interaction with tRNA region. The active-site Cysteine persulfide intermediate is C211.

The protein belongs to the MnmA/TRMU family.

The protein resides in the cytoplasm. It catalyses the reaction S-sulfanyl-L-cysteinyl-[protein] + uridine(34) in tRNA + AH2 + ATP = 2-thiouridine(34) in tRNA + L-cysteinyl-[protein] + A + AMP + diphosphate + H(+). Its function is as follows. Catalyzes the 2-thiolation of uridine at the wobble position (U34) of tRNA, leading to the formation of s(2)U34. This chain is tRNA-specific 2-thiouridylase MnmA, found in Ruegeria pomeroyi (strain ATCC 700808 / DSM 15171 / DSS-3) (Silicibacter pomeroyi).